We begin with the raw amino-acid sequence, 255 residues long: Type III pantothenate kinase (255 aa).

6–13 (DVGNTHIV) contributes to the ATP binding site. Substrate is bound by residues Y100 and 107–110 (GADR). D109 acts as the Proton acceptor in catalysis. D129 is a binding site for K(+). T132 contributes to the ATP binding site. T184 contacts substrate.

The protein belongs to the type III pantothenate kinase family. Homodimer. NH4(+) serves as cofactor. K(+) is required as a cofactor.

Its subcellular location is the cytoplasm. It catalyses the reaction (R)-pantothenate + ATP = (R)-4'-phosphopantothenate + ADP + H(+). The protein operates within cofactor biosynthesis; coenzyme A biosynthesis; CoA from (R)-pantothenate: step 1/5. Catalyzes the phosphorylation of pantothenate (Pan), the first step in CoA biosynthesis. In Ruminiclostridium cellulolyticum (strain ATCC 35319 / DSM 5812 / JCM 6584 / H10) (Clostridium cellulolyticum), this protein is Type III pantothenate kinase.